Consider the following 430-residue polypeptide: 3-phosphoshikimate 1-carboxyvinyltransferase (430 aa).

Lys21, Ser22, and Arg26 together coordinate 3-phosphoshikimate. A phosphoenolpyruvate-binding site is contributed by Lys21. The phosphoenolpyruvate site is built by Gly94 and Arg122. The 3-phosphoshikimate site is built by Ser168, Gln170, Asp315, and Lys342. Gln170 is a binding site for phosphoenolpyruvate. Residue Asp315 is the Proton acceptor of the active site. Arg346 and Arg389 together coordinate phosphoenolpyruvate.

The protein belongs to the EPSP synthase family. In terms of assembly, monomer.

The protein resides in the cytoplasm. It carries out the reaction 3-phosphoshikimate + phosphoenolpyruvate = 5-O-(1-carboxyvinyl)-3-phosphoshikimate + phosphate. Its pathway is metabolic intermediate biosynthesis; chorismate biosynthesis; chorismate from D-erythrose 4-phosphate and phosphoenolpyruvate: step 6/7. Functionally, catalyzes the transfer of the enolpyruvyl moiety of phosphoenolpyruvate (PEP) to the 5-hydroxyl of shikimate-3-phosphate (S3P) to produce enolpyruvyl shikimate-3-phosphate and inorganic phosphate. This Salinibacter ruber (strain DSM 13855 / M31) protein is 3-phosphoshikimate 1-carboxyvinyltransferase.